The sequence spans 576 residues: Alpha-bisabolol synthase (576 aa).

5 residues coordinate (2E,6E)-farnesyl diphosphate: arginine 286, aspartate 323, aspartate 327, arginine 466, and asparagine 469. Mg(2+) is bound by residues aspartate 323 and aspartate 327. A DDXXD motif motif is present at residues 323–327 (DDVYD). Asparagine 469, threonine 473, and glutamate 477 together coordinate Mg(2+).

It belongs to the terpene synthase family. Tpsb subfamily. The cofactor is Mg(2+). It depends on Mn(2+) as a cofactor.

Produces a mixture of beta-bisabolene and alpha-bisabolol, along with traces of alpha-bisabolene and farnesene isomers from (2E,6E)-farnesyl diphosphate in fragrance biosynthesis. This chain is Alpha-bisabolol synthase, found in Santalum spicatum (Australian sandalwood).